The following is a 494-amino-acid chain: Amidophosphoribosyltransferase (494 aa).

A propeptide spanning residues 1–10 is cleaved from the precursor; that stretch reads MFNYSGLNEE. Residue Cys11 is the Nucleophile of the active site. Residues 11–231 form the Glutamine amidotransferase type-2 domain; sequence CGVFGIWNHP…AGEYVVINDK (221 aa). Mg(2+) contacts are provided by Ser294, Asp356, and Asp357.

The protein in the C-terminal section; belongs to the purine/pyrimidine phosphoribosyltransferase family. Mg(2+) is required as a cofactor.

It carries out the reaction 5-phospho-beta-D-ribosylamine + L-glutamate + diphosphate = 5-phospho-alpha-D-ribose 1-diphosphate + L-glutamine + H2O. It participates in purine metabolism; IMP biosynthesis via de novo pathway; N(1)-(5-phospho-D-ribosyl)glycinamide from 5-phospho-alpha-D-ribose 1-diphosphate: step 1/2. Catalyzes the formation of phosphoribosylamine from phosphoribosylpyrophosphate (PRPP) and glutamine. This Staphylococcus aureus (strain Mu50 / ATCC 700699) protein is Amidophosphoribosyltransferase.